The primary structure comprises 95 residues: Feather keratin B-4 (95 aa).

Residue Ser-1 is modified to N-acetylserine.

The protein belongs to the avian keratin family. The avian keratins (F-ker, S-ker, C-ker and B-ker) are a complex mixture of very similar polypeptides.

The polypeptide is Feather keratin B-4 (Anas platyrhynchos (Mallard)).